Consider the following 222-residue polypeptide: Sperm acrosome-associated protein 9 (222 aa).

Positions 164–222 (QHVSEPQAHQESTRGAARPAQAIGTQPRATKHKCRQLTKASLKPRGCSKPPWRPPGGKL) are disordered.

As to quaternary structure, microtubule inner protein component of sperm flagellar doublet microtubules. Interacts with CABP1 and CALR. Interacts with INCA1. Interacts with microtubules.

Its subcellular location is the cytoplasm. It is found in the cytoplasmic vesicle. It localises to the secretory vesicle. The protein resides in the acrosome. The protein localises to the cytoskeleton. Its subcellular location is the cilium basal body. It is found in the flagellum axoneme. It localises to the cilium axoneme. The protein resides in the nucleus. Its function is as follows. Microtubule inner protein (MIP) part of the dynein-decorated doublet microtubules (DMTs) of multiciliated respiratory cells and the distal singlet microtubules of monoflagellated spermatozoa. Forms an extensive interaction network cross-linking the lumen of axonemal doublet microtubules. This Homo sapiens (Human) protein is Sperm acrosome-associated protein 9.